Reading from the N-terminus, the 413-residue chain is Multifunctional CCA protein (413 aa).

ATP-binding residues include G8 and R11. CTP contacts are provided by G8 and R11. Residues D21 and D23 each contribute to the Mg(2+) site. ATP is bound by residues R91, R137, and R140. CTP-binding residues include R91, R137, and R140. Positions 228 to 329 (TGIHTLMVLA…LKVFDKADAW (102 aa)) constitute an HD domain.

It belongs to the tRNA nucleotidyltransferase/poly(A) polymerase family. Bacterial CCA-adding enzyme type 1 subfamily. Monomer. Can also form homodimers and oligomers. Requires Mg(2+) as cofactor. It depends on Ni(2+) as a cofactor.

The catalysed reaction is a tRNA precursor + 2 CTP + ATP = a tRNA with a 3' CCA end + 3 diphosphate. It catalyses the reaction a tRNA with a 3' CCA end + 2 CTP + ATP = a tRNA with a 3' CCACCA end + 3 diphosphate. Its function is as follows. Catalyzes the addition and repair of the essential 3'-terminal CCA sequence in tRNAs without using a nucleic acid template. Adds these three nucleotides in the order of C, C, and A to the tRNA nucleotide-73, using CTP and ATP as substrates and producing inorganic pyrophosphate. tRNA 3'-terminal CCA addition is required both for tRNA processing and repair. Also involved in tRNA surveillance by mediating tandem CCA addition to generate a CCACCA at the 3' terminus of unstable tRNAs. While stable tRNAs receive only 3'-terminal CCA, unstable tRNAs are marked with CCACCA and rapidly degraded. This chain is Multifunctional CCA protein, found in Aeromonas salmonicida (strain A449).